Here is a 190-residue protein sequence, read N- to C-terminus: B3 domain-containing protein At4g01580 (190 aa).

A disordered region spans residues 1 to 25; that stretch reads MVITRNMKARATSVSHRQSQQDPES. Positions 12–23 are enriched in polar residues; sequence TSVSHRQSQQDP. Positions 29 to 122 form a DNA-binding region, TF-B3; it reads KFFKLVLPST…SFRVIIFNAS (94 aa).

It localises to the nucleus. This chain is B3 domain-containing protein At4g01580, found in Arabidopsis thaliana (Mouse-ear cress).